The sequence spans 328 residues: Formimidoylglutamase (328 aa).

Mn(2+) is bound by residues H133, D159, H161, D163, D253, and D255.

This sequence belongs to the arginase family. It depends on Mn(2+) as a cofactor.

It carries out the reaction N-formimidoyl-L-glutamate + H2O = formamide + L-glutamate. The protein operates within amino-acid degradation; L-histidine degradation into L-glutamate; L-glutamate from N-formimidoyl-L-glutamate (hydrolase route): step 1/1. In terms of biological role, catalyzes the conversion of N-formimidoyl-L-glutamate to L-glutamate and formamide. This is Formimidoylglutamase from Streptococcus pyogenes serotype M18 (strain MGAS8232).